A 431-amino-acid chain; its full sequence is Glutamate-1-semialdehyde 2,1-aminomutase (431 aa).

K267 bears the N6-(pyridoxal phosphate)lysine mark.

The protein belongs to the class-III pyridoxal-phosphate-dependent aminotransferase family. HemL subfamily. As to quaternary structure, homodimer. Pyridoxal 5'-phosphate serves as cofactor.

Its subcellular location is the cytoplasm. It carries out the reaction (S)-4-amino-5-oxopentanoate = 5-aminolevulinate. It participates in porphyrin-containing compound metabolism; protoporphyrin-IX biosynthesis; 5-aminolevulinate from L-glutamyl-tRNA(Glu): step 2/2. In Syntrophomonas wolfei subsp. wolfei (strain DSM 2245B / Goettingen), this protein is Glutamate-1-semialdehyde 2,1-aminomutase.